We begin with the raw amino-acid sequence, 476 residues long: Sulfate adenylyltransferase subunit 1 (476 aa).

In terms of domain architecture, tr-type G spans 24-228 (KSLLRFLTCG…MAWYQGPTLL (205 aa)). A G1 region spans residues 33–40 (GSVDDGKS). 33–40 (GSVDDGKS) lines the GTP pocket. Residues 91 to 95 (GITID) form a G2 region. The G3 stretch occupies residues 112 to 115 (DTPG). GTP is bound by residues 112-116 (DTPGH) and 167-170 (NKMD). A G4 region spans residues 167-170 (NKMD). The tract at residues 205–207 (SAL) is G5.

The protein belongs to the TRAFAC class translation factor GTPase superfamily. Classic translation factor GTPase family. CysN/NodQ subfamily. In terms of assembly, heterodimer composed of CysD, the smaller subunit, and CysN.

It carries out the reaction sulfate + ATP + H(+) = adenosine 5'-phosphosulfate + diphosphate. Its pathway is sulfur metabolism; hydrogen sulfide biosynthesis; sulfite from sulfate: step 1/3. In terms of biological role, with CysD forms the ATP sulfurylase (ATPS) that catalyzes the adenylation of sulfate producing adenosine 5'-phosphosulfate (APS) and diphosphate, the first enzymatic step in sulfur assimilation pathway. APS synthesis involves the formation of a high-energy phosphoric-sulfuric acid anhydride bond driven by GTP hydrolysis by CysN coupled to ATP hydrolysis by CysD. In Vibrio vulnificus (strain CMCP6), this protein is Sulfate adenylyltransferase subunit 1.